We begin with the raw amino-acid sequence, 687 residues long: Chloride channel protein ClC-Kb (687 aa).

Residues 1 to 50 (MEEIVGLREGSPRKPVPLQELWRPCPRIRRNIQGSLEWLKERLFRVGEDW) lie on the Cytoplasmic side of the membrane. A run of 2 helical transmembrane segments spans residues 51–82 (YFLV…KWLY) and 91–111 (LRYL…SGFS). Residues 116–127 (PSSGGSGIPEVK) constitute an intramembrane region (helical). Ser-121 lines the chloride pocket. Helical transmembrane passes span 141-160 (IKNF…TGST) and 161-180 (IFLG…AAYL). An N-linked (GlcNAc...) asparagine glycan is attached at Asn-193. The segment at residues 203-224 (AGAAVGVATVFAAPISGVLFSI) is an intramembrane region (helical). A helical membrane pass occupies residues 236-255 (YWRGFFAATCGAFMFHLLAV). 4 residues coordinate Ca(2+): Glu-259, Glu-261, Asp-278, and Glu-281. Transmembrane regions (helical) follow at residues 282–310 (IFFF…LFFL) and 325–342 (PLYS…TYPP). Residues 349 to 360 (ASRLSMSEYLET) constitute an intramembrane region (helical). A run of 2 helical transmembrane segments spans residues 400–420 (GTLV…TTIP) and 421–440 (IPAG…GRLF). Residue Phe-426 participates in chloride binding. An intramembrane region (helical) is located at residues 464 to 496 (GAYALAGAAAFSGAVTHTLSTALLAFEVSGQIV). A helical membrane pass occupies residues 500–520 (PVLMAVLAANAICQSYQPSFY). Topologically, residues 521-687 (DGTIIVKKLP…STLTNPPAPK (167 aa)) are cytoplasmic. CBS domains lie at 551–609 (MNCT…DSAS) and 626–687 (CPTQ…PAPK).

The protein belongs to the chloride channel (TC 2.A.49) family. CLCNKB subfamily. Homodimer. Interacts with BSND. Post-translationally, N-glycosylated. As to expression, expressed predominantly in the kidney. Expressed in all segments of the nephron examined, including the S2 segment and the glomerulus.

The protein localises to the basolateral cell membrane. It catalyses the reaction chloride(in) = chloride(out). The catalysed reaction is iodide(out) = iodide(in). It carries out the reaction nitrate(in) = nitrate(out). The enzyme catalyses bromide(in) = bromide(out). In terms of biological role, anion-selective channel permeable to small monovalent anions with ion selectivity for chloride &gt; bromide &gt; nitrate &gt; iodide. Forms a homodimeric channel where each subunit has its own ion conduction pathway. May conduct double-barreled currents controlled by two types of gates, two fast gates that control each subunit independently and a slow common gate that opens and shuts off both subunits simultaneously. Assembles with the regulatory subunit BSND/Barttin for sorting at the basolateral plasma membrane domain and functional switch to the ion conducting state. CLCNKB:BSND channels display mostly a linear current-voltage relationship controlled by common gate. Mediates chloride conductance along nephron segments, namely the thick ascending limb of Henle's loop, convoluted tubule and the collecting duct, contributing to the maintenance of systemic acid-base and electrolyte homeostasis. Conducts chloride currents in the stria vascularis of the inner ear to establish the endocochlear potential necessary for normal hearing. The chain is Chloride channel protein ClC-Kb from Rattus norvegicus (Rat).